Here is a 209-residue protein sequence, read N- to C-terminus: Glutathione S-transferase 1-1 (209 aa).

The GST N-terminal domain maps to 1-81 (MADFYYLPGS…YLVEKYGKTD (81 aa)). Residues Ser-10, 51–53 (HTI), and 65–67 (ESR) each bind glutathione. The GST C-terminal domain maps to 87–209 (CPKKRAVINQ…GCLEFKKFFE (123 aa)).

The protein belongs to the GST superfamily. Theta family. As to quaternary structure, homodimer.

The catalysed reaction is RX + glutathione = an S-substituted glutathione + a halide anion + H(+). It carries out the reaction 1,1,1-trichloro-2,2-bis(4-chlorophenyl)ethane = 1,1-dichloro-2,2-bis(4-chlorophenyl)ethylene + chloride + H(+). Functionally, conjugation of reduced glutathione to a wide number of exogenous and endogenous hydrophobic electrophiles. Has DDT dehydrochlorinase activity. The chain is Glutathione S-transferase 1-1 (GstD1) from Drosophila sechellia (Fruit fly).